The primary structure comprises 255 residues: ATP synthase subunit a (255 aa).

Residues 1 to 6 constitute a propeptide, removed in mature form; sequence MNFIIN. 5 helical membrane-spanning segments follow: residues 32-52, 91-111, 121-141, 159-200, and 219-251; these read LTSF…FSIL, LFPF…VSLV, LIWT…TGLA, PLVP…LAGL, and LSIL…IKDA.

In terms of assembly, F-type ATP synthases have 2 components, the catalytic core F(1) and the membrane-embedded component F(0), linked together by a central stalk and a peripheral stalk. The central stalk, also called rotor shaft, is often seen as part of F(1). The peripheral stalk is seen as part of F(0). F(0) contains the membrane channel next to the rotor. F-type ATP synthases form dimers but each monomer functions independently in ATP generation. The dimer consists of 17 different polypeptides: ATP1 (subunit alpha, 3 molecules per monomer, part of F(1)), ATP2 (subunit beta, 3 copies per monomer, part of F(1)), ATP3 (subunit gamma, part of the central stalk), ATP4 (subunit b, part of the peripheral stalk), ATP5/OSCP (subunit 5/OSCP, part of the peripheral stalk), ATP6 (subunit a, part of the peripheral stalk), ATP7 (subunit d, part of the peripheral stalk), ATP8 (subunit 8, part of the peripheral stalk), OLI1 (subunit c, part of the rotor, 10 molecules per monomer), ATP14 (subunit h, part of the peripheral stalk), ATP15 (subunit epsilon, part of the central stalk), ATP16 (subunit delta, part of the central stalk), ATP17 (subunit f, part of the peripheral stalk), ATP18 (subunit i/j, part of the peripheral stalk), ATP19 (subunit k, dimer-specific, at interface between monomers), ATP20 (subunit g, at interface between monomers), TIM11 (subunit e, at interface between monomers).

It is found in the mitochondrion inner membrane. Mitochondrial membrane ATP synthase (F(1)F(0) ATP synthase or Complex V) produces ATP from ADP in the presence of a proton gradient across the membrane which is generated by electron transport complexes of the respiratory chain. F-type ATP synthases consist of two structural domains, F(1) - containing the extramembraneous catalytic core, and F(0) - containing the membrane proton channel, linked together by a central stalk and a peripheral stalk. During catalysis, ATP synthesis in the catalytic domain of F(1) is coupled via a rotary mechanism of the central stalk subunits to proton translocation. Key component of the proton channel; it may play a direct role in the translocation of protons across the membrane. This is ATP synthase subunit a from Yarrowia lipolytica (strain CLIB 122 / E 150) (Yeast).